The primary structure comprises 190 residues: Potassium-transporting ATPase KdpC subunit (190 aa).

A helical membrane pass occupies residues Leu13–Ala33.

The protein belongs to the KdpC family. As to quaternary structure, the system is composed of three essential subunits: KdpA, KdpB and KdpC.

The protein resides in the cell inner membrane. Its function is as follows. Part of the high-affinity ATP-driven potassium transport (or Kdp) system, which catalyzes the hydrolysis of ATP coupled with the electrogenic transport of potassium into the cytoplasm. This subunit acts as a catalytic chaperone that increases the ATP-binding affinity of the ATP-hydrolyzing subunit KdpB by the formation of a transient KdpB/KdpC/ATP ternary complex. This Leptospira interrogans serogroup Icterohaemorrhagiae serovar copenhageni (strain Fiocruz L1-130) protein is Potassium-transporting ATPase KdpC subunit.